The chain runs to 86 residues: Small ribosomal subunit protein bS20 (86 aa).

Residues 1–22 form a disordered region; sequence MANIKSQIKRIRTNERRRLRNQ. Residues 7–20 show a composition bias toward basic residues; it reads QIKRIRTNERRRLR.

This sequence belongs to the bacterial ribosomal protein bS20 family.

Functionally, binds directly to 16S ribosomal RNA. The polypeptide is Small ribosomal subunit protein bS20 (Mycolicibacterium smegmatis (strain ATCC 700084 / mc(2)155) (Mycobacterium smegmatis)).